Reading from the N-terminus, the 307-residue chain is Universal stress protein A family protein C25B2.10 (307 aa).

The segment at 1-63 is disordered; that stretch reads MSESAPAGSK…RSSMEQPTFR (63 aa). A compositionally biased stretch (basic and acidic residues) spans 21–30; that stretch reads PEPRTSKDQQ. Residue Ser44 is modified to Phosphoserine. The residue at position 48 (Thr48) is a Phosphothreonine. Phosphoserine is present on residues Ser98 and Ser102.

This sequence belongs to the universal stress protein A family.

It is found in the barrier septum. It localises to the cell tip. The protein is Universal stress protein A family protein C25B2.10 of Schizosaccharomyces pombe (strain 972 / ATCC 24843) (Fission yeast).